Consider the following 221-residue polypeptide: Putative hemin import ATP-binding protein HrtA (221 aa).

The ABC transporter domain maps to 3 to 221 (LVVEDIVKNF…IELEDGKITD (219 aa)). An ATP-binding site is contributed by 39-46 (GASGSGKT).

It belongs to the ABC transporter superfamily. HrtA family. In terms of assembly, the complex is composed of two ATP-binding proteins (HrtA), two transmembrane proteins (HrtB) and a solute-binding protein.

Its subcellular location is the cell membrane. Functionally, part of the ABC transporter complex hrt involved in hemin import. Responsible for energy coupling to the transport system. This Staphylococcus aureus (strain bovine RF122 / ET3-1) protein is Putative hemin import ATP-binding protein HrtA (hrtA).